Here is a 142-residue protein sequence, read N- to C-terminus: MKSYMAKTNEVERKWFIVDAEGKTLGRLSSEIAKILTGKNKPEYTPHVDTGDFVIVVNAEKVVLTGKKLDQESYTYHTGHPGGLKQISFRRMLAEKPELLTYHAVKGMIPKTRLGRQMLKKLKVYAGENHDHEAQQPQALEL.

Belongs to the universal ribosomal protein uL13 family. As to quaternary structure, part of the 50S ribosomal subunit.

In terms of biological role, this protein is one of the early assembly proteins of the 50S ribosomal subunit, although it is not seen to bind rRNA by itself. It is important during the early stages of 50S assembly. This Alkaliphilus metalliredigens (strain QYMF) protein is Large ribosomal subunit protein uL13.